The chain runs to 90 residues: Small ribosomal subunit protein uS15 (90 aa).

Belongs to the universal ribosomal protein uS15 family. As to quaternary structure, part of the 30S ribosomal subunit. Forms a bridge to the 50S subunit in the 70S ribosome, contacting the 23S rRNA.

One of the primary rRNA binding proteins, it binds directly to 16S rRNA where it helps nucleate assembly of the platform of the 30S subunit by binding and bridging several RNA helices of the 16S rRNA. Functionally, forms an intersubunit bridge (bridge B4) with the 23S rRNA of the 50S subunit in the ribosome. This is Small ribosomal subunit protein uS15 from Wolbachia pipientis wMel.